We begin with the raw amino-acid sequence, 885 residues long: Protein transport protein SEC24-1 (885 aa).

Zn(2+) contacts are provided by Cys-164, Cys-167, Cys-186, and Cys-189. The segment at 164–189 is zinc finger-like; sequence CRRCRSYLNPFVAFIEQGRRWQCNIC. A disordered region spans residues 296-332; it reads DDYEESDDDDDEDDDDEEEDNEEEEEEEEDEEDDDDS.

The protein belongs to the SEC23/SEC24 family. SEC24 subfamily. In terms of assembly, the COPII coat is composed of at least 5 proteins: the SEC23/24 complex, the SEC13/31 complex, and the protein SAR1. Golgi apparatus membrane; Peripheral membrane protein; Cytoplasmic side.

The protein resides in the cytoplasm. It localises to the cytoplasmic vesicle. It is found in the COPII-coated vesicle membrane. The protein localises to the endoplasmic reticulum membrane. Its subcellular location is the golgi apparatus membrane. In terms of biological role, component of the coat protein complex II (COPII) which promotes the formation of transport vesicles from the endoplasmic reticulum (ER). The coat has two main functions, the physical deformation of the endoplasmic reticulum membrane into vesicles and the selection of cargo molecules. In Saccharomyces uvarum (strain ATCC 76518 / CBS 7001 / CLIB 283 / NBRC 10550 / MCYC 623 / NCYC 2669 / NRRL Y-11845) (Yeast), this protein is Protein transport protein SEC24-1 (SEC241).